The primary structure comprises 156 residues: Small ribosomal subunit protein uS7 (156 aa).

It belongs to the universal ribosomal protein uS7 family. In terms of assembly, part of the 30S ribosomal subunit. Contacts proteins S9 and S11.

Its function is as follows. One of the primary rRNA binding proteins, it binds directly to 16S rRNA where it nucleates assembly of the head domain of the 30S subunit. Is located at the subunit interface close to the decoding center, probably blocks exit of the E-site tRNA. The polypeptide is Small ribosomal subunit protein uS7 (Pectobacterium carotovorum subsp. carotovorum (strain PC1)).